A 372-amino-acid chain; its full sequence is MQSVIAQAKRIVVKVGSSLVTNDGKGLDHDAIARWAAQIAKLRGTGKEVVLVSSGAIAEGMQRLGWARRPKEIHELQAAAAVGQMGLAQVYESQFGRYGIRTAQVLLTHADLADRERYLNARSTLLTLLSLGVVPIINENDTVVTDEIKFGDNDTLGALVTNLIEGDALVILTDQRGLYTADPRKDPNAEFVHEALAGTPELEAMAGGAGSSIGRGGMLTKILAAKRAAKSGAHTTIASGREADVLGRLAAGEAIGTQLLAPTGRLTARKQWMADHLQLRGRVIIDAGAVEKLTSGGKSLLPIGVVEVQGEFARGEVIACASPEGKEVARGITNYSSAEARLIARKPSSEIESVLGHLNEPELIHRDNLVLV.

Lysine 14 provides a ligand contact to ATP. Positions 54, 141, and 153 each coordinate substrate. 173–174 (TD) contributes to the ATP binding site. In terms of domain architecture, PUA spans 280–358 (RGRVIIDAGA…SEIESVLGHL (79 aa)).

This sequence belongs to the glutamate 5-kinase family.

It localises to the cytoplasm. The catalysed reaction is L-glutamate + ATP = L-glutamyl 5-phosphate + ADP. It participates in amino-acid biosynthesis; L-proline biosynthesis; L-glutamate 5-semialdehyde from L-glutamate: step 1/2. Its function is as follows. Catalyzes the transfer of a phosphate group to glutamate to form L-glutamate 5-phosphate. The polypeptide is Glutamate 5-kinase (Cupriavidus metallidurans (strain ATCC 43123 / DSM 2839 / NBRC 102507 / CH34) (Ralstonia metallidurans)).